The sequence spans 862 residues: Taxadiene synthase (862 aa).

5 residues coordinate Mg(2+): Asp-613, Asp-617, Asn-757, Thr-761, and Glu-765. Positions 613–617 match the DDXXD motif motif; that stretch reads DDMAD.

Belongs to the terpene synthase family. Mg(2+) serves as cofactor.

The enzyme catalyses (2E,6E,10E)-geranylgeranyl diphosphate = taxa-4(5),11(12)-diene + diphosphate. It participates in alkaloid biosynthesis; taxol biosynthesis; taxa-4(20),11-dien-5alpha-ol from geranylgeranyl diphosphate: step 1/2. Functionally, catalyzes the cyclization of the ubiquitous isoprenoid intermediate geranylgeranyl diphosphate to taxa-4,11-diene, the parent olefin with a taxane skeleton. In Taxus brevifolia (Pacific yew), this protein is Taxadiene synthase (TDC1).